Reading from the N-terminus, the 640-residue chain is Arogenate dehydrogenase 1, chloroplastic (640 aa).

The N-terminal 18 residues, 1–18 (MAETLITKPPLSLSFTSL), are a transit peptide targeting the chloroplast. Prephenate/arogenate dehydrogenase domains lie at 53 to 334 (LRIA…GEND) and 365 to 640 (LKIG…LLTS).

The protein belongs to the prephenate/arogenate dehydrogenase family. As to expression, expressed in roots, stems, leaves, flowers, siliques and seeds. More abundant in seeds.

Its subcellular location is the plastid. The protein resides in the chloroplast. The enzyme catalyses L-arogenate + NADP(+) = L-tyrosine + CO2 + NADPH. Its pathway is amino-acid biosynthesis; L-tyrosine biosynthesis; L-tyrosine from L-arogenate (NADP(+) route): step 1/1. Its function is as follows. Involved in the biosynthesis of tyrosine. Has no prephenate dehydrogenase activity. The sequence is that of Arogenate dehydrogenase 1, chloroplastic (TYRAAT1) from Arabidopsis thaliana (Mouse-ear cress).